Consider the following 195-residue polypeptide: Imidazoleglycerol-phosphate dehydratase (195 aa).

The protein belongs to the imidazoleglycerol-phosphate dehydratase family.

It is found in the cytoplasm. The catalysed reaction is D-erythro-1-(imidazol-4-yl)glycerol 3-phosphate = 3-(imidazol-4-yl)-2-oxopropyl phosphate + H2O. It participates in amino-acid biosynthesis; L-histidine biosynthesis; L-histidine from 5-phospho-alpha-D-ribose 1-diphosphate: step 6/9. The sequence is that of Imidazoleglycerol-phosphate dehydratase from Paraburkholderia phymatum (strain DSM 17167 / CIP 108236 / LMG 21445 / STM815) (Burkholderia phymatum).